A 221-amino-acid chain; its full sequence is Lysine N-acyltransferase MbtK (221 aa).

Residues 1-34 (MSDAPAESAPAQIDPAQTDPAEQPVQILPRERSD) form a disordered region. Histidine 141 is a substrate binding site. The active-site Proton acceptor is aspartate 179.

Belongs to the lysine N-acyltransferase MbtK family. In terms of assembly, monomer.

Its pathway is siderophore biosynthesis; mycobactin biosynthesis. Functionally, acyltransferase required for the direct transfer of medium- to long-chain fatty acyl moieties from a carrier protein (MbtL) on to the epsilon-amino group of lysine residue in the mycobactin core. The protein is Lysine N-acyltransferase MbtK (mbtK) of Mycolicibacterium paratuberculosis (strain ATCC BAA-968 / K-10) (Mycobacterium paratuberculosis).